We begin with the raw amino-acid sequence, 362 residues long: Heme A synthase (362 aa).

5 consecutive transmembrane segments (helical) span residues 15-35 (VRIWLTLVAMLIAVMVLVGGA), 104-124 (VIGIAYLLPLLWFLWRGAIAP), 129-149 (ALWAIFALGALQGAVGWWMVA), 161-181 (VRLAIHLTLALVIYAAIVWTL), and 200-220 (AIALLALTLVQLFLGALVAGL). His-264 is a binding site for heme. The next 3 membrane-spanning stretches (helical) occupy residues 266 to 285 (MMAYALWALAAWHAIDALRA), 293 to 313 (GALWLFAALSLQAVLGILTLL), and 316 to 336 (VPIGLALAHQAVGIVVLTLAV). Residue His-324 participates in heme binding.

The protein belongs to the COX15/CtaA family. Type 2 subfamily. As to quaternary structure, interacts with CtaB. It depends on heme b as a cofactor.

The protein localises to the cell membrane. It carries out the reaction Fe(II)-heme o + 2 A + H2O = Fe(II)-heme a + 2 AH2. Its pathway is porphyrin-containing compound metabolism; heme A biosynthesis; heme A from heme O: step 1/1. Its function is as follows. Catalyzes the conversion of heme O to heme A by two successive hydroxylations of the methyl group at C8. The first hydroxylation forms heme I, the second hydroxylation results in an unstable dihydroxymethyl group, which spontaneously dehydrates, resulting in the formyl group of heme A. The polypeptide is Heme A synthase (Rhodopseudomonas palustris (strain BisB5)).